Consider the following 712-residue polypeptide: Polyribonucleotide nucleotidyltransferase (712 aa).

Mg(2+)-binding residues include Asp485 and Asp491. A KH domain is found at 552 to 611 (PRIHTMKIDPKKIKDVIGKGGAVIRSLTEETGTSIDIDDDGTVKIAATDNNAAKMVMSRI). Positions 621 to 689 (NAIYTGKVSR…RQNRIRLTMK (69 aa)) constitute an S1 motif domain.

This sequence belongs to the polyribonucleotide nucleotidyltransferase family. As to quaternary structure, component of the RNA degradosome, which is a multiprotein complex involved in RNA processing and mRNA degradation. Mg(2+) is required as a cofactor.

The protein resides in the cytoplasm. It carries out the reaction RNA(n+1) + phosphate = RNA(n) + a ribonucleoside 5'-diphosphate. Functionally, involved in mRNA degradation. Catalyzes the phosphorolysis of single-stranded polyribonucleotides processively in the 3'- to 5'-direction. The polypeptide is Polyribonucleotide nucleotidyltransferase (Haemophilus ducreyi (strain 35000HP / ATCC 700724)).